The sequence spans 331 residues: Bifunctional nuclease (331 aa).

Residues 126 to 261 enclose the BFN domain; sequence CVQNNPRVLR…RIAYNNGLKV (136 aa). The UVR domain occupies 291 to 326; sequence EAQEFDLVRNMLVAAVEERYKDAAQYRDQLFMFRAK.

The protein belongs to the bifunctional nuclease family.

Its subcellular location is the nucleus. In terms of biological role, bifunctional nuclease with both RNase and DNase activities. Involved in basal defense response. Participates in abscisic acid-derived callose deposition following infection by a necrotrophic pathogen. In Oryza minuta, this protein is Bifunctional nuclease (BBD).